Reading from the N-terminus, the 252-residue chain is Membrane protein insertase YidC (252 aa).

Residues 1-19 (MKKVLWIIIIILMVGALAG) form the signal peptide. Cys20 carries N-palmitoyl cysteine lipidation. A lipid anchor (S-diacylglycerol cysteine) is attached at Cys20. Transmembrane regions (helical) follow at residues 34 to 54 (IWNHFFVYPLSWVLISVADLL), 58 to 78 (FGLSIIVVTIGIRLFLLPLMI), 131 to 151 (MAGCLPLFIQLPVMMAFYFAI), 162 to 182 (FLWFDLGSPDPLYILPVVAGI), 201 to 221 (VIIYIMPVMIVVAGVTLPSAL), and 223 to 243 (LYWVVGNLFMIIQTYFTVVRF).

The protein belongs to the OXA1/ALB3/YidC family. Type 2 subfamily.

It is found in the cell membrane. Required for the insertion and/or proper folding and/or complex formation of integral membrane proteins into the membrane. Involved in integration of membrane proteins that insert both dependently and independently of the Sec translocase complex, as well as at least some lipoproteins. The polypeptide is Membrane protein insertase YidC (Alkalihalophilus pseudofirmus (strain ATCC BAA-2126 / JCM 17055 / OF4) (Bacillus pseudofirmus)).